Consider the following 547-residue polypeptide: Glucose-6-phosphate isomerase 2 (547 aa).

The active-site Proton donor is E351. Residues H382 and K508 contribute to the active site.

It belongs to the GPI family.

It localises to the cytoplasm. The enzyme catalyses alpha-D-glucose 6-phosphate = beta-D-fructose 6-phosphate. It functions in the pathway carbohydrate biosynthesis; gluconeogenesis. It participates in carbohydrate degradation; glycolysis; D-glyceraldehyde 3-phosphate and glycerone phosphate from D-glucose: step 2/4. Its function is as follows. Catalyzes the reversible isomerization of glucose-6-phosphate to fructose-6-phosphate. The chain is Glucose-6-phosphate isomerase 2 from Neisseria meningitidis serogroup B (strain ATCC BAA-335 / MC58).